Consider the following 611-residue polypeptide: O-fucosyltransferase 8 (611 aa).

Residues 1–29 are disordered; it reads MGKQGSPRSPRPETIDKEEKFGRRSLDSL. Basic and acidic residues predominate over residues 10–26; it reads PRPETIDKEEKFGRRSL. A helical; Signal-anchor for type II membrane protein membrane pass occupies residues 78–98; it reads IVLMISVTGFIFCMDSIMVSI. Asn115, Asn216, and Asn270 each carry an N-linked (GlcNAc...) asparagine glycan. 386–388 is a binding site for substrate; the sequence is HLR. N-linked (GlcNAc...) asparagine glycosylation is present at Asn506.

It belongs to the glycosyltransferase GT106 family.

The protein resides in the membrane. Its pathway is glycan metabolism. In Arabidopsis thaliana (Mouse-ear cress), this protein is O-fucosyltransferase 8.